A 106-amino-acid polypeptide reads, in one-letter code: Putative toxin Rv3098A/RVBD_3098A (106 aa).

The protein belongs to the PemK/MazF family. As to quaternary structure, forms a complex with cognate antitoxin Rv3098B/RVBD_3098B.

In terms of biological role, putative toxic component of a possible type II toxin-antitoxin (TA) system. Its toxic effect may be neutralized by cognate antitoxin Rv3098B/RVBD_3098B. The protein is Putative toxin Rv3098A/RVBD_3098A of Mycobacterium tuberculosis (strain ATCC 25618 / H37Rv).